Reading from the N-terminus, the 179-residue chain is Deoxyuridine 5'-triphosphate nucleotidohydrolase (179 aa).

Substrate contacts are provided by residues 90–92 (RSG), asparagine 103, 107–109 (TVD), and lysine 117.

This sequence belongs to the dUTPase family. It depends on Mg(2+) as a cofactor.

The catalysed reaction is dUTP + H2O = dUMP + diphosphate + H(+). The protein operates within pyrimidine metabolism; dUMP biosynthesis; dUMP from dCTP (dUTP route): step 2/2. Functionally, this enzyme is involved in nucleotide metabolism: it produces dUMP, the immediate precursor of thymidine nucleotides and it decreases the intracellular concentration of dUTP so that uracil cannot be incorporated into DNA. This is Deoxyuridine 5'-triphosphate nucleotidohydrolase from Thermobifida fusca (strain YX).